The chain runs to 420 residues: Tryptophan synthase beta chain (420 aa).

N6-(pyridoxal phosphate)lysine is present on Lys-112.

Belongs to the TrpB family. In terms of assembly, tetramer of two alpha and two beta chains. It depends on pyridoxal 5'-phosphate as a cofactor.

The catalysed reaction is (1S,2R)-1-C-(indol-3-yl)glycerol 3-phosphate + L-serine = D-glyceraldehyde 3-phosphate + L-tryptophan + H2O. The protein operates within amino-acid biosynthesis; L-tryptophan biosynthesis; L-tryptophan from chorismate: step 5/5. Its function is as follows. The beta subunit is responsible for the synthesis of L-tryptophan from indole and L-serine. In Thermosipho africanus (strain TCF52B), this protein is Tryptophan synthase beta chain.